We begin with the raw amino-acid sequence, 132 residues long: Dinoflagellate viral nucleoprotein 5 (132 aa).

A compositionally biased stretch (basic residues) spans 1 to 44 (MAAMKKAMKVKKSAKKSAKKSGKKGGMKKKAKRVSKVARGKRAK). A disordered region spans residues 1–84 (MAAMKKAMKV…KKQSEHGKKI (84 aa)). A compositionally biased stretch (polar residues) spans 57 to 66 (GGLTKNSLVK).

Phosphorylated.

It is found in the nucleus. The protein localises to the chromosome. Its function is as follows. DNA-binding protein, which similarly to histones, may compact DNA into chromatin. This is Dinoflagellate viral nucleoprotein 5 from Hematodinium sp.